A 253-amino-acid polypeptide reads, in one-letter code: Maleate isomerase (253 aa).

Residues Asn14, 80–82 (CLV), Tyr137, and Asn167 each bind substrate. Cys80 acts as the Nucleophile in catalysis. Position 80 is an S-(2-succinyl)cysteine (Cys80). The active-site Proton donor is Cys198. 199–200 (VQ) is a substrate binding site.

It belongs to the maleate isomerase family. Homodimer.

It carries out the reaction maleate = fumarate. Catalyzes cis-trans isomerization of the C2-C3 double bond in maleate to yield fumarate. This is Maleate isomerase from Alcaligenes faecalis.